The primary structure comprises 385 residues: 1-deoxy-D-xylulose 5-phosphate reductoisomerase (385 aa).

The NADPH site is built by T10, G11, S12, I13, K37, and N124. K125 lines the 1-deoxy-D-xylulose 5-phosphate pocket. Residue E126 coordinates NADPH. D150 provides a ligand contact to Mn(2+). 4 residues coordinate 1-deoxy-D-xylulose 5-phosphate: S151, E152, S176, and H199. Position 152 (E152) interacts with Mn(2+). G205 lines the NADPH pocket. S212, N217, K218, and E221 together coordinate 1-deoxy-D-xylulose 5-phosphate. E221 contacts Mn(2+).

The protein belongs to the DXR family. The cofactor is Mg(2+). It depends on Mn(2+) as a cofactor.

The enzyme catalyses 2-C-methyl-D-erythritol 4-phosphate + NADP(+) = 1-deoxy-D-xylulose 5-phosphate + NADPH + H(+). The protein operates within isoprenoid biosynthesis; isopentenyl diphosphate biosynthesis via DXP pathway; isopentenyl diphosphate from 1-deoxy-D-xylulose 5-phosphate: step 1/6. Functionally, catalyzes the NADPH-dependent rearrangement and reduction of 1-deoxy-D-xylulose-5-phosphate (DXP) to 2-C-methyl-D-erythritol 4-phosphate (MEP). This Clostridium botulinum (strain Langeland / NCTC 10281 / Type F) protein is 1-deoxy-D-xylulose 5-phosphate reductoisomerase.